The following is an 89-amino-acid chain: MSDRKAVIKNADMSEDMQQDAVDCATQAMEKYNIEKDIAAYIKKEFDKKYNPTWHCIVGRNFGSYVTHETKHFIYFYLGQVAILLFKSG.

Belongs to the dynein light chain family. Homodimer. The cytoplasmic dynein 1 complex consists of two catalytic heavy chains (HCs) and a number of non-catalytic subunits which present intermediate chains (ICs), light intermediate chains (LICs) and light chains (LCs); the composition seems to vary in respect to the IC, LIC and LC composition. The heavy chain homodimer serves as a scaffold for the probable homodimeric assembly of the respective non-catalytic subunits. Dynein ICs and LICs bind directly to the HC dimer and the LCs assemble on the IC dimer. Interacts with DYNC1I1. Interacts with BMF. Component of the myosin V motor complex. Interacts with BCAS1. Interacts with Basson/BSN. Interacts with AMBRA1 (via TQT motifs); tethering AMBRA1 to the cytoskeleton. Interacts with IQUB.

The protein localises to the cytoplasm. The protein resides in the cytoskeleton. Functionally, acts as one of several non-catalytic accessory components of the cytoplasmic dynein 1 complex that are thought to be involved in linking dynein to cargos and to adapter proteins that regulate dynein function. Cytoplasmic dynein 1 acts as a motor for the intracellular retrograde motility of vesicles and organelles along microtubules. May play a role in changing or maintaining the spatial distribution of cytoskeletal structures. In Homo sapiens (Human), this protein is Dynein light chain 2, cytoplasmic (DYNLL2).